Here is a 352-residue protein sequence, read N- to C-terminus: 4-hydroxy-3-methylbut-2-en-1-yl diphosphate synthase (flavodoxin) (352 aa).

Cysteine 265, cysteine 268, cysteine 300, and glutamate 307 together coordinate [4Fe-4S] cluster.

Belongs to the IspG family. The cofactor is [4Fe-4S] cluster.

The catalysed reaction is (2E)-4-hydroxy-3-methylbut-2-enyl diphosphate + oxidized [flavodoxin] + H2O + 2 H(+) = 2-C-methyl-D-erythritol 2,4-cyclic diphosphate + reduced [flavodoxin]. The protein operates within isoprenoid biosynthesis; isopentenyl diphosphate biosynthesis via DXP pathway; isopentenyl diphosphate from 1-deoxy-D-xylulose 5-phosphate: step 5/6. Functionally, converts 2C-methyl-D-erythritol 2,4-cyclodiphosphate (ME-2,4cPP) into 1-hydroxy-2-methyl-2-(E)-butenyl 4-diphosphate. The sequence is that of 4-hydroxy-3-methylbut-2-en-1-yl diphosphate synthase (flavodoxin) from Persephonella marina (strain DSM 14350 / EX-H1).